The following is a 143-amino-acid chain: Large ribosomal subunit protein uL11 (143 aa).

This sequence belongs to the universal ribosomal protein uL11 family. In terms of assembly, part of the ribosomal stalk of the 50S ribosomal subunit. Interacts with L10 and the large rRNA to form the base of the stalk. L10 forms an elongated spine to which 2 L12 dimers bind in a sequential fashion forming a pentameric L10(L12)2(L12)2 complex. Post-translationally, one or more lysine residues are methylated.

Forms part of the ribosomal stalk which helps the ribosome interact with GTP-bound translation factors. The polypeptide is Large ribosomal subunit protein uL11 (Agrobacterium fabrum (strain C58 / ATCC 33970) (Agrobacterium tumefaciens (strain C58))).